Reading from the N-terminus, the 253-residue chain is Acidic 26 kDa endochitinase (253 aa).

The first 24 residues, M1–A24, serve as a signal peptide directing secretion. Catalysis depends on E92, which acts as the Proton donor. Residues C212 and C244 are joined by a disulfide bond.

Belongs to the glycosyl hydrolase 19 family. Chitinase class II subfamily.

The protein resides in the secreted. The protein localises to the extracellular space. The catalysed reaction is Random endo-hydrolysis of N-acetyl-beta-D-glucosaminide (1-&gt;4)-beta-linkages in chitin and chitodextrins.. Its function is as follows. Defense against chitin-containing fungal pathogens. This is Acidic 26 kDa endochitinase (CHI3) from Solanum lycopersicum (Tomato).